A 65-amino-acid polypeptide reads, in one-letter code: Large ribosomal subunit protein bL35 (65 aa).

Positions 1 to 52 (MPKMKSNRAAAKRFKRTANGGFKSGNSFTSHRFHGKTKKQRRQLRGLSMMDK) are disordered. The segment covering 31 to 44 (HRFHGKTKKQRRQL) has biased composition (basic residues).

Belongs to the bacterial ribosomal protein bL35 family.

The protein is Large ribosomal subunit protein bL35 of Limosilactobacillus reuteri (strain DSM 20016) (Lactobacillus reuteri).